Consider the following 566-residue polypeptide: Urease subunit alpha (566 aa).

The 439-residue stretch at 128-566 (GGIDTHIHFI…LPMAQRYFLF (439 aa)) folds into the Urease domain. Residues histidine 133, histidine 135, and lysine 216 each contribute to the Ni(2+) site. Lysine 216 is modified (N6-carboxylysine). Histidine 218 lines the substrate pocket. Ni(2+)-binding residues include histidine 245 and histidine 271. The active-site Proton donor is the histidine 319. Position 359 (aspartate 359) interacts with Ni(2+).

The protein belongs to the metallo-dependent hydrolases superfamily. Urease alpha subunit family. As to quaternary structure, heterotrimer of UreA (gamma), UreB (beta) and UreC (alpha) subunits. Three heterotrimers associate to form the active enzyme. Ni cation serves as cofactor. Post-translationally, carboxylation allows a single lysine to coordinate two nickel ions.

The protein resides in the cytoplasm. It carries out the reaction urea + 2 H2O + H(+) = hydrogencarbonate + 2 NH4(+). It functions in the pathway nitrogen metabolism; urea degradation; CO(2) and NH(3) from urea (urease route): step 1/1. In Pseudomonas fluorescens (strain Pf0-1), this protein is Urease subunit alpha.